Here is a 332-residue protein sequence, read N- to C-terminus: ADP-L-glycero-D-manno-heptose-6-epimerase (332 aa).

Residues 10-11, 31-32, Lys-38, Lys-53, 75-79, and Asn-92 each bind NADP(+); these read MI, DK, and MGACS. Catalysis depends on Tyr-145, which acts as the Proton acceptor. Lys-149 is an NADP(+) binding site. Asn-173 serves as a coordination point for substrate. 2 residues coordinate NADP(+): Val-174 and Lys-182. Catalysis depends on Lys-182, which acts as the Proton acceptor. Substrate-binding positions include Arg-184, His-191, 205 to 208, Arg-219, and Tyr-290; that span reads FKSY.

It belongs to the NAD(P)-dependent epimerase/dehydratase family. HldD subfamily. In terms of assembly, homopentamer. Requires NADP(+) as cofactor.

It catalyses the reaction ADP-D-glycero-beta-D-manno-heptose = ADP-L-glycero-beta-D-manno-heptose. The protein operates within nucleotide-sugar biosynthesis; ADP-L-glycero-beta-D-manno-heptose biosynthesis; ADP-L-glycero-beta-D-manno-heptose from D-glycero-beta-D-manno-heptose 7-phosphate: step 4/4. Its function is as follows. Catalyzes the interconversion between ADP-D-glycero-beta-D-manno-heptose and ADP-L-glycero-beta-D-manno-heptose via an epimerization at carbon 6 of the heptose. The protein is ADP-L-glycero-D-manno-heptose-6-epimerase of Fusobacterium nucleatum subsp. nucleatum (strain ATCC 25586 / DSM 15643 / BCRC 10681 / CIP 101130 / JCM 8532 / KCTC 2640 / LMG 13131 / VPI 4355).